A 211-amino-acid chain; its full sequence is Prolactin-1 (211 aa).

Positions 1 to 23 (MARRSQGTKLHLAVLCLVVSCHA) are cleaved as a signal peptide. Disulfide bonds link Cys69/Cys184 and Cys201/Cys211.

This sequence belongs to the somatotropin/prolactin family.

It localises to the secreted. In Oncorhynchus keta (Chum salmon), this protein is Prolactin-1 (prl1).